A 161-amino-acid polypeptide reads, in one-letter code: Cyclic pyranopterin monophosphate synthase (161 aa).

Substrate contacts are provided by residues 76 to 78 (MCH) and 114 to 115 (ME). Residue aspartate 129 is part of the active site.

The protein belongs to the MoaC family. Homohexamer; trimer of dimers.

It catalyses the reaction (8S)-3',8-cyclo-7,8-dihydroguanosine 5'-triphosphate = cyclic pyranopterin phosphate + diphosphate. It functions in the pathway cofactor biosynthesis; molybdopterin biosynthesis. Functionally, catalyzes the conversion of (8S)-3',8-cyclo-7,8-dihydroguanosine 5'-triphosphate to cyclic pyranopterin monophosphate (cPMP). In Clostridium acetobutylicum (strain ATCC 824 / DSM 792 / JCM 1419 / IAM 19013 / LMG 5710 / NBRC 13948 / NRRL B-527 / VKM B-1787 / 2291 / W), this protein is Cyclic pyranopterin monophosphate synthase.